A 907-amino-acid chain; its full sequence is Leucine-rich repeat-containing G-protein coupled receptor 5 (907 aa).

Residues 1–21 (MDTSCVHMLLSLLALLQLVAA) form the signal peptide. The Extracellular portion of the chain corresponds to 22 to 561 (GSSPGPDAIP…EHLFGSWLIR (540 aa)). The LRRNT domain maps to 25–66 (PGPDAIPRGCPSHCHCELDGRMLLRVDCSDLGLSELPSNLSV). 2 disulfides stabilise this stretch: Cys-34–Cys-40 and Cys-38–Cys-52. N-linked (GlcNAc...) asparagine glycans are attached at residues Asn-63 and Asn-77. LRR repeat units lie at residues 67 to 88 (FTSY…LLHR), 91 to 112 (FLEE…AFTG), 115 to 136 (SLKV…ALQN), 139 to 160 (SLQS…CFSG), 163 to 184 (SLRH…AFRS), 187 to 208 (ALQA…AFGN), 211 to 232 (SLVV…CFDG), 235 to 256 (SLET…IKTL), 258 to 279 (NLKE…AFVG), 282 to 303 (SLIT…AFQH), 306 to 325 (ELRT…PHLT), 329 to 350 (TLES…VCDQ), 353 to 374 (NLQV…SGCQ), 375 to 396 (KLQK…TFQQ), 399 to 420 (NLRS…AFST), and 423 to 446 (SLIK…HGLT). Asn-208 carries an N-linked (GlcNAc...) asparagine glycan. A disulfide bond links Cys-348 and Cys-373. A disulfide bridge connects residues Cys-479 and Cys-541. The chain crosses the membrane as a helical span at residues 562-582 (IGVWTTAVLALSCNALVALTV). Residues 583–593 (FRTPLYISSIK) lie on the Cytoplasmic side of the membrane. A helical membrane pass occupies residues 594-614 (LLIGVIAVVDILMGVSSAVLA). The Extracellular segment spans residues 615-638 (AVDAFTFGRFAQHGAWWEDGIGCQ). The cysteines at positions 637 and 712 are disulfide-linked. Residues 639–659 (IVGFLSIFASESSIFLLTLAA) traverse the membrane as a helical segment. The Cytoplasmic portion of the chain corresponds to 660–682 (LERGFSVKCSSKFEVKAPLFSLR). A helical transmembrane segment spans residues 683 to 703 (AIVLLCVLLALTIATIPLLGG). The Extracellular segment spans residues 704 to 723 (SKYNASPLCLPLPFGEPSTT). The chain crosses the membrane as a helical span at residues 724–744 (GYMVALVLLNSLCFLIMTIAY). Over 745-767 (TKLYCSLEKGELENLWDCSMVKH) the chain is Cytoplasmic. A helical transmembrane segment spans residues 768–788 (IALLLFANCILYCPVAFLSFS). Topologically, residues 789–802 (SLLNLTFISPDVIK) are extracellular. N-linked (GlcNAc...) asparagine glycosylation is present at Asn-792. A helical transmembrane segment spans residues 803 to 823 (FILLVIVPLPSCLNPLLYIVF). Residues 824–907 (NPHFKEDMGS…LSSVAFVPCL (84 aa)) are Cytoplasmic-facing.

It belongs to the G-protein coupled receptor 1 family. In terms of assembly, identified in a complex composed of RNF43, LGR5 and RSPO1. Also interacts with other R-spondin ligands, including RSPO2, RSPO3 and RSPO4. Expressed in the intestinal epithelium (at protein level). Expressed in the gonads, the adrenal gland, and in the brain. In the central nervous system expression is restricted to the olfactory bulb. In the adrenal gland detected only in the neural-crest derived chromaffin cells of the medulla, but not in the cells of the adrenal cortex. In the gonads, the expression is high in Graafian follicle, but absent from primary and secondary follicles. In the intestine, exclusively expressed in cycling crypt base columnar cells. Expressed in the lower bulge and secondary germ area of telogen hair follicles and in the lower outer root sheath of anagen hair follicle.

The protein resides in the cell membrane. It is found in the golgi apparatus. Its subcellular location is the trans-Golgi network membrane. Receptor for R-spondins that potentiates the canonical Wnt signaling pathway and acts as a stem cell marker of the intestinal epithelium and the hair follicle. Upon binding to R-spondins (RSPO1, RSPO2, RSPO3 or RSPO4), associates with phosphorylated LRP6 and frizzled receptors that are activated by extracellular Wnt receptors, triggering the canonical Wnt signaling pathway to increase expression of target genes. In contrast to classical G-protein coupled receptors, does not activate heterotrimeric G-proteins to transduce the signal. Involved in the development and/or maintenance of the adult intestinal stem cells during postembryonic development. This chain is Leucine-rich repeat-containing G-protein coupled receptor 5 (Lgr5), found in Mus musculus (Mouse).